The sequence spans 92 residues: Small ribosomal subunit protein uS19 (92 aa).

Belongs to the universal ribosomal protein uS19 family.

Functionally, protein S19 forms a complex with S13 that binds strongly to the 16S ribosomal RNA. This Granulibacter bethesdensis (strain ATCC BAA-1260 / CGDNIH1) protein is Small ribosomal subunit protein uS19.